A 424-amino-acid polypeptide reads, in one-letter code: Proline--tRNA ligase (424 aa).

The protein belongs to the class-II aminoacyl-tRNA synthetase family. ProS type 2 subfamily. In terms of assembly, homodimer.

It localises to the cytoplasm. The enzyme catalyses tRNA(Pro) + L-proline + ATP = L-prolyl-tRNA(Pro) + AMP + diphosphate. In terms of biological role, catalyzes the attachment of proline to tRNA(Pro) in a two-step reaction: proline is first activated by ATP to form Pro-AMP and then transferred to the acceptor end of tRNA(Pro). This is Proline--tRNA ligase from Ehrlichia canis (strain Jake).